Reading from the N-terminus, the 356-residue chain is Histidinol-phosphate aminotransferase (356 aa).

Lys-214 is modified (N6-(pyridoxal phosphate)lysine).

Belongs to the class-II pyridoxal-phosphate-dependent aminotransferase family. Histidinol-phosphate aminotransferase subfamily. As to quaternary structure, homodimer. Pyridoxal 5'-phosphate serves as cofactor.

The enzyme catalyses L-histidinol phosphate + 2-oxoglutarate = 3-(imidazol-4-yl)-2-oxopropyl phosphate + L-glutamate. It functions in the pathway amino-acid biosynthesis; L-histidine biosynthesis; L-histidine from 5-phospho-alpha-D-ribose 1-diphosphate: step 7/9. In Escherichia coli O7:K1 (strain IAI39 / ExPEC), this protein is Histidinol-phosphate aminotransferase.